The chain runs to 390 residues: Terminal nucleotidyltransferase 5C (390 aa).

This sequence belongs to the TENT family.

The protein localises to the nucleus. The protein resides in the cytoplasm. Its subcellular location is the cytoskeleton. It is found in the microtubule organizing center. It localises to the centrosome. It carries out the reaction RNA(n) + ATP = RNA(n)-3'-adenine ribonucleotide + diphosphate. Its function is as follows. Catalyzes the transfer of one adenosine molecule from an ATP to an mRNA poly(A) tail bearing a 3'-OH terminal group and enhances mRNA stability and gene expression. This chain is Terminal nucleotidyltransferase 5C, found in Gallus gallus (Chicken).